A 343-amino-acid chain; its full sequence is Phosphate acyltransferase (343 aa).

This sequence belongs to the PlsX family. As to quaternary structure, homodimer. Probably interacts with PlsY.

It is found in the cytoplasm. The catalysed reaction is a fatty acyl-[ACP] + phosphate = an acyl phosphate + holo-[ACP]. The protein operates within lipid metabolism; phospholipid metabolism. Catalyzes the reversible formation of acyl-phosphate (acyl-PO(4)) from acyl-[acyl-carrier-protein] (acyl-ACP). This enzyme utilizes acyl-ACP as fatty acyl donor, but not acyl-CoA. The polypeptide is Phosphate acyltransferase (Limosilactobacillus reuteri (strain DSM 20016) (Lactobacillus reuteri)).